The following is a 447-amino-acid chain: Probable glycine dehydrogenase (decarboxylating) subunit 1 (447 aa).

This sequence belongs to the GcvP family. N-terminal subunit subfamily. As to quaternary structure, the glycine cleavage system is composed of four proteins: P, T, L and H. In this organism, the P 'protein' is a heterodimer of two subunits.

The catalysed reaction is N(6)-[(R)-lipoyl]-L-lysyl-[glycine-cleavage complex H protein] + glycine + H(+) = N(6)-[(R)-S(8)-aminomethyldihydrolipoyl]-L-lysyl-[glycine-cleavage complex H protein] + CO2. The glycine cleavage system catalyzes the degradation of glycine. The P protein binds the alpha-amino group of glycine through its pyridoxal phosphate cofactor; CO(2) is released and the remaining methylamine moiety is then transferred to the lipoamide cofactor of the H protein. The chain is Probable glycine dehydrogenase (decarboxylating) subunit 1 from Bacillus cereus (strain ATCC 10987 / NRS 248).